Reading from the N-terminus, the 398-residue chain is Stearoyl-[acyl-carrier-protein] 9-desaturase, chloroplastic (398 aa).

The transit peptide at 1–34 (MALKLNPLASQPYNFPSSARPPISTFRSPKFLCL) directs the protein to the chloroplast. Residues Glu-140, Glu-178, His-181, Glu-231, Glu-264, and His-267 each coordinate Fe cation.

Belongs to the fatty acid desaturase type 2 family. In terms of assembly, homodimer. The cofactor is Fe(2+).

It localises to the plastid. The protein localises to the chloroplast. The catalysed reaction is octadecanoyl-[ACP] + 2 reduced [2Fe-2S]-[ferredoxin] + O2 + 2 H(+) = (9Z)-octadecenoyl-[ACP] + 2 oxidized [2Fe-2S]-[ferredoxin] + 2 H2O. It participates in lipid metabolism; fatty acid metabolism. Functionally, converts stearoyl-ACP to oleoyl-ACP by introduction of a cis double bond between carbons 9 and 10 of the acyl chain. The polypeptide is Stearoyl-[acyl-carrier-protein] 9-desaturase, chloroplastic (Brassica napus (Rape)).